A 220-amino-acid chain; its full sequence is 7-cyano-7-deazaguanine synthase (220 aa).

Position 10 to 20 (10 to 20 (FSGGQDSTTCL)) interacts with ATP. Cysteine 186, cysteine 195, cysteine 198, and cysteine 201 together coordinate Zn(2+).

It belongs to the QueC family. As to quaternary structure, homodimer. Requires Zn(2+) as cofactor.

It carries out the reaction 7-carboxy-7-deazaguanine + NH4(+) + ATP = 7-cyano-7-deazaguanine + ADP + phosphate + H2O + H(+). It functions in the pathway purine metabolism; 7-cyano-7-deazaguanine biosynthesis. Functionally, catalyzes the ATP-dependent conversion of 7-carboxy-7-deazaguanine (CDG) to 7-cyano-7-deazaguanine (preQ(0)). The polypeptide is 7-cyano-7-deazaguanine synthase (Bacillus anthracis (strain A0248)).